We begin with the raw amino-acid sequence, 283 residues long: 4-hydroxy-tetrahydrodipicolinate reductase (283 aa).

Residues 15–20 (GALGRM) and 116–118 (GTT) contribute to the NAD(+) site. Histidine 172 acts as the Proton donor/acceptor in catalysis. A (S)-2,3,4,5-tetrahydrodipicolinate-binding site is contributed by histidine 173. Lysine 176 functions as the Proton donor in the catalytic mechanism. A (S)-2,3,4,5-tetrahydrodipicolinate-binding site is contributed by 182 to 183 (GT).

It belongs to the DapB family.

The protein localises to the cytoplasm. The catalysed reaction is (S)-2,3,4,5-tetrahydrodipicolinate + NAD(+) + H2O = (2S,4S)-4-hydroxy-2,3,4,5-tetrahydrodipicolinate + NADH + H(+). It catalyses the reaction (S)-2,3,4,5-tetrahydrodipicolinate + NADP(+) + H2O = (2S,4S)-4-hydroxy-2,3,4,5-tetrahydrodipicolinate + NADPH + H(+). It functions in the pathway amino-acid biosynthesis; L-lysine biosynthesis via DAP pathway; (S)-tetrahydrodipicolinate from L-aspartate: step 4/4. Catalyzes the conversion of 4-hydroxy-tetrahydrodipicolinate (HTPA) to tetrahydrodipicolinate. In Prochlorococcus marinus (strain MIT 9313), this protein is 4-hydroxy-tetrahydrodipicolinate reductase.